The chain runs to 300 residues: Protoheme IX farnesyltransferase (300 aa).

9 helical membrane passes run 26–46 (VVQL…PGLP), 54–74 (IAWA…FNCI), 102–122 (LLFS…LVNP), 123–143 (LTMW…TLIL), 150–170 (NIVI…AAMT), 177–197 (ALIL…ALAL), 224–244 (VLLY…YGMS), 246–266 (WPYL…GFAL), and 279–299 (FRFS…DHYL).

The protein belongs to the UbiA prenyltransferase family. Protoheme IX farnesyltransferase subfamily.

The protein localises to the cell inner membrane. The enzyme catalyses heme b + (2E,6E)-farnesyl diphosphate + H2O = Fe(II)-heme o + diphosphate. Its pathway is porphyrin-containing compound metabolism; heme O biosynthesis; heme O from protoheme: step 1/1. Its function is as follows. Converts heme B (protoheme IX) to heme O by substitution of the vinyl group on carbon 2 of heme B porphyrin ring with a hydroxyethyl farnesyl side group. The protein is Protoheme IX farnesyltransferase of Verminephrobacter eiseniae (strain EF01-2).